Reading from the N-terminus, the 161-residue chain is SsrA-binding protein (161 aa).

This sequence belongs to the SmpB family.

The protein localises to the cytoplasm. Its function is as follows. Required for rescue of stalled ribosomes mediated by trans-translation. Binds to transfer-messenger RNA (tmRNA), required for stable association of tmRNA with ribosomes. tmRNA and SmpB together mimic tRNA shape, replacing the anticodon stem-loop with SmpB. tmRNA is encoded by the ssrA gene; the 2 termini fold to resemble tRNA(Ala) and it encodes a 'tag peptide', a short internal open reading frame. During trans-translation Ala-aminoacylated tmRNA acts like a tRNA, entering the A-site of stalled ribosomes, displacing the stalled mRNA. The ribosome then switches to translate the ORF on the tmRNA; the nascent peptide is terminated with the 'tag peptide' encoded by the tmRNA and targeted for degradation. The ribosome is freed to recommence translation, which seems to be the essential function of trans-translation. This is SsrA-binding protein from Vibrio vulnificus (strain YJ016).